Reading from the N-terminus, the 482-residue chain is tRNA sulfurtransferase (482 aa).

Residues 61–165 (QQVLEILTTT…DDKLNQILAH (105 aa)) enclose the THUMP domain. Residues 183–184 (LI), Lys265, Gly287, and Gln296 each bind ATP. Cys344 and Cys456 form a disulfide bridge. A Rhodanese domain is found at 404–482 (IEEHAVVLDI…GFNNVKVYRP (79 aa)). The Cysteine persulfide intermediate role is filled by Cys456.

This sequence belongs to the ThiI family.

Its subcellular location is the cytoplasm. The catalysed reaction is [ThiI sulfur-carrier protein]-S-sulfanyl-L-cysteine + a uridine in tRNA + 2 reduced [2Fe-2S]-[ferredoxin] + ATP + H(+) = [ThiI sulfur-carrier protein]-L-cysteine + a 4-thiouridine in tRNA + 2 oxidized [2Fe-2S]-[ferredoxin] + AMP + diphosphate. The enzyme catalyses [ThiS sulfur-carrier protein]-C-terminal Gly-Gly-AMP + S-sulfanyl-L-cysteinyl-[cysteine desulfurase] + AH2 = [ThiS sulfur-carrier protein]-C-terminal-Gly-aminoethanethioate + L-cysteinyl-[cysteine desulfurase] + A + AMP + 2 H(+). Its pathway is cofactor biosynthesis; thiamine diphosphate biosynthesis. Functionally, catalyzes the ATP-dependent transfer of a sulfur to tRNA to produce 4-thiouridine in position 8 of tRNAs, which functions as a near-UV photosensor. Also catalyzes the transfer of sulfur to the sulfur carrier protein ThiS, forming ThiS-thiocarboxylate. This is a step in the synthesis of thiazole, in the thiamine biosynthesis pathway. The sulfur is donated as persulfide by IscS. The chain is tRNA sulfurtransferase from Vibrio vulnificus (strain YJ016).